The sequence spans 599 residues: DNA-directed RNA polymerase III subunit RPC3 (599 aa).

Positions 350–375 are disordered; the sequence is PKKRSASNGDDERPTKKIKTEDSDDI. Over residues 359-370 the composition is skewed to basic and acidic residues; it reads DDERPTKKIKTE. A leucine-zipper region spans residues 528–549; sequence LIFSMAEILSNIQAFREDHKIL.

This sequence belongs to the RNA polymerase beta chain family. Component of the RNA polymerase III (Pol III) complex consisting of 17 subunits.

It localises to the nucleus. Functionally, DNA-dependent RNA polymerase catalyzes the transcription of DNA into RNA using the four ribonucleoside triphosphates as substrates. Specific core component of RNA polymerase III which synthesizes small RNAs, such as 5S rRNA and tRNAs. The protein is DNA-directed RNA polymerase III subunit RPC3 (RPC82) of Scheffersomyces stipitis (strain ATCC 58785 / CBS 6054 / NBRC 10063 / NRRL Y-11545) (Yeast).